The following is a 761-amino-acid chain: MATSSSSSSSLLLPNINFNSRQSPTITRSVSIAGIFLPRNRLSYNHNLRIRTRLIRASKDDNVAVEDRDNAVKINGDYNGSARLNGNGSARKSVNGDFNGSARLNGNGSLVKYVNGSVTVETEEVTKKRKEEVRKKRVEDIGQEDAWFKNNTQQKQVEVSVTPGGRWNRFKTYSTIQRTLEIWGFVVQFIFRTWLSNKKFSYKGGMTEEKKVLRRKVLAKWLKENILRLGPTFIKIGQQFSTRVDILPQEYVDQLSELQDQVPPFPSATALSIVEEELGGSVEDIFDRFDYEPIAAASLGQVHRARLKGQEVVLKVQRPGLKDLFDIDLKNLRVIAEYLQKVDPKSDGAKRDWVAIYDECASVLYQEIDYTKEAANSELFANNFKDLEYVKVPSIYWEYTTPQVLTMEYVPGIKINKIQALDQLGVDRKRLGRYAVESYLEQILSHGFFHADPHPGNIAVDDVNGGRLIFYDFGMMGSISPNIREGLLEAFYGVYEKDPDKVLQAMVQMGVLVPTGDLTAVRRTALFFLNSFEERLAAQRKEKEEIAAAEELGFKKPLSKEEKQEKKKQRLAAIGEDLLAIAADQPFRFPATFTFVVRAFSVLDGIGKGLDPRFDITEIAKPYALELLRFREAGVEVVVKDLRKRWDRQSQAFYNLFRQADRVEKLAVVIERLEQGDLKLRVRALESERAFQRVAAVQKTVGSAVAAGSLVNLATILYLNSIKTPATIAYTVCAFFSLQVLIGIIKVKKFDQREKLITGTA.

The transit peptide at M1–A57 directs the protein to the chloroplast. A Protein kinase domain is found at R288–R648. Residues I294 to V302 and K315 each bind ATP. D452 (proton acceptor) is an active-site residue. Residues P725 to I745 form a helical membrane-spanning segment.

Belongs to the protein kinase superfamily. ADCK protein kinase family. As to expression, mostly expressed in leaves and flowers, and, to a lower extent, in stems, siliques and roots.

The protein resides in the plastid. Its subcellular location is the chloroplast envelope. It localises to the chloroplast membrane. It catalyses the reaction L-seryl-[protein] + ATP = O-phospho-L-seryl-[protein] + ADP + H(+). The catalysed reaction is L-threonyl-[protein] + ATP = O-phospho-L-threonyl-[protein] + ADP + H(+). Involved in resistance to oxidative stress (e.g. hydrogen peroxide H(2)O(2)), high light and heavy metals (e.g. cadmium ions Cd(2+)). Influences responses to reactive oxygen species (ROS) production. Together with SIA1, regulates iron distribution within the chloroplast and mediates the oxidative stress response. Together with ABC1K7, influences chloroplast lipid synthesis/accumulation and modulates chloroplast membrane composition in response to stress. This is Protein ACTIVITY OF BC1 COMPLEX KINASE 8, chloroplastic from Arabidopsis thaliana (Mouse-ear cress).